The following is a 478-amino-acid chain: Noelin-3 (478 aa).

The N-terminal stretch at 1 to 23 (MSAPLLKLGAVLSTMAMISNWMS) is a signal peptide. Asn33, Asn95, Asn179, Asn299, and Asn465 each carry an N-linked (GlcNAc...) asparagine glycan. Positions 77–217 (CSRDAKSRQL…TRLRDCMKKL (141 aa)) form a coiled coil. The region spanning 218 to 470 (TCGKLMKITG…QVLFNVTLFH (253 aa)) is the Olfactomedin-like domain. An intrachain disulfide couples Cys219 to Cys401.

Peripherally associated with AMPAR complex. AMPAR complex consists of an inner core made of 4 pore-forming GluA/GRIA proteins (GRIA1, GRIA2, GRIA3 and GRIA4) and 4 major auxiliary subunits arranged in a twofold symmetry. One of the two pairs of distinct binding sites is occupied either by CNIH2, CNIH3 or CACNG2, CACNG3. The other harbors CACNG2, CACNG3, CACNG4, CACNG8 or GSG1L. This inner core of AMPAR complex is complemented by outer core constituents binding directly to the GluA/GRIA proteins at sites distinct from the interaction sites of the inner core constituents. Outer core constituents include at least PRRT1, PRRT2, CKAMP44/SHISA9, FRRS1L and NRN1. The proteins of the inner and outer core serve as a platform for other, more peripherally associated AMPAR constituents, including OLFM3. Alone or in combination, these auxiliary subunits control the gating and pharmacology of the AMPAR complex and profoundly impact their biogenesis and protein processing. Homodimer. Interacts with MYOC. Interacts with OLFM2. Expressed in the brain (at protein level). Also expressed in the retina, mainly in the ganglion cell layer and in the amacrine cell subregion of the inner nuclear layer. Expressed at high levels in the epithelial cells of the posterior iris and the ciliary body and, at lower levels, in the trabecular meshwork. Isoform 2 preferentially expressed in retina and brain, while isoform 1 preferentially expressed in the tissues of the eye angle.

The protein localises to the secreted. It is found in the synapse. This is Noelin-3 (Olfm3) from Rattus norvegicus (Rat).